The chain runs to 223 residues: SCMKAAPMKEVSIRGQGSLAYPGLRTQGNLETLSGPNDATRGLTSLADTFEHVIEELLDEQQVIQPSKENKDADLYSTRVMLSSQVPLEPPLLFLLEEYKNYLDAANMSMRVRRHSDPARRGELSVCDSTSEWVTAAEKKTAVDMSGATVTVLEKVPVPKGQLKQYFYETKCSSKGYAKEGCRGIDKRYWNSQCRTTQSFVRALTMDNKKRVGWRFIRIDTSC.

The signal sequence occupies residues Ser-1–Ala-5. The propeptide occupies Ala-6–Arg-114. N-linked (GlcNAc...) asparagine glycosylation occurs at Asn-107. 2 disulfides stabilise this stretch: Cys-127–Cys-194 and Cys-172–Cys-223.

The protein belongs to the NGF-beta family.

Its subcellular location is the secreted. Its function is as follows. Promotes the survival of neuronal populations that are all located either in the central nervous system or directly connected to it. The protein is Neurotrophic factor BDNF precursor form (BDNF) of Candoia carinata (Papuan tree boa).